We begin with the raw amino-acid sequence, 180 residues long: Probable cobalt-precorrin-6B C(15)-methyltransferase (decarboxylating) (180 aa).

Residues Thr-16, 40-44 (GCGSG), Asp-61, and Ala-89 contribute to the S-adenosyl-L-methionine site.

It belongs to the methyltransferase superfamily. Archaeal-type CbiT family.

It carries out the reaction Co-precorrin-6B + S-adenosyl-L-methionine = Co-precorrin-7 + S-adenosyl-L-homocysteine + CO2. The protein operates within cofactor biosynthesis; adenosylcobalamin biosynthesis; cob(II)yrinate a,c-diamide from sirohydrochlorin (anaerobic route): step 8/10. Its function is as follows. Catalyzes the methylation of C-15 in cobalt-precorrin-6B followed by the decarboxylation of C-12 to form cobalt-precorrin-7. The polypeptide is Probable cobalt-precorrin-6B C(15)-methyltransferase (decarboxylating) (Methanococcus vannielii (strain ATCC 35089 / DSM 1224 / JCM 13029 / OCM 148 / SB)).